The following is a 112-amino-acid chain: UPF0342 protein SUB0718 (112 aa).

This sequence belongs to the UPF0342 family.

In Streptococcus uberis (strain ATCC BAA-854 / 0140J), this protein is UPF0342 protein SUB0718.